The chain runs to 261 residues: MIIADNIKQLHSIRNSLIKQQKIGFVPTMGALHNGHISLIKKAKSENDVVIVSIFVNPTQFNNPNDYQTYPNQLQQDIQILESLDVDVLFNPSEKDIYPDGNLLRIEPKLEIANILEGKSRPGHFSGMLTVVLKLLQITKPNNLYLGEKDYQQVMLIKQLVKDFFINTKIIVCPTQRQPSGLPLSSRNKNLTSTDIEIANKIYEILRQDDFSNLEELTNKINSAGAKLQYIQKLNNRIFLAFYIGKVRLIDNFLKETGPSC.

Position 29–36 (29–36 (MGALHNGH)) interacts with ATP. Histidine 36 functions as the Proton donor in the catalytic mechanism. Glutamine 60 lines the (R)-pantoate pocket. Glutamine 60 serves as a coordination point for beta-alanine. Residue 147–150 (GEKD) participates in ATP binding. Residue glutamine 153 participates in (R)-pantoate binding. Residue 184-187 (LSSR) coordinates ATP.

It belongs to the pantothenate synthetase family. Homodimer.

The protein localises to the cytoplasm. The catalysed reaction is (R)-pantoate + beta-alanine + ATP = (R)-pantothenate + AMP + diphosphate + H(+). Its pathway is cofactor biosynthesis; (R)-pantothenate biosynthesis; (R)-pantothenate from (R)-pantoate and beta-alanine: step 1/1. Functionally, catalyzes the condensation of pantoate with beta-alanine in an ATP-dependent reaction via a pantoyl-adenylate intermediate. The protein is Pantothenate synthetase of Francisella tularensis subsp. novicida (strain U112).